Reading from the N-terminus, the 297-residue chain is Cyclin-dependent kinase 1 (297 aa).

An N-acetylmethionine modification is found at M1. Y4 is modified (phosphotyrosine; by PKR). The region spanning 4–287 (YIKIEKIGEG…GKMALKHPYF (284 aa)) is the Protein kinase domain. K6 and K9 each carry N6-acetyllysine; alternate. Glycyl lysine isopeptide (Lys-Gly) (interchain with G-Cter in SUMO2); alternate cross-links involve residues K6 and K9. An ATP-binding site is contributed by 10 to 18 (IGEGTYGVV). T14 carries the post-translational modification Phosphothreonine. At Y15 the chain carries Phosphotyrosine; by PKMYT1, WEE1, WEE2 and PKC/PRKCD. At Y15 the chain carries Phosphotyrosine; by WEE1 and WEE2. Position 19 is a phosphotyrosine (Y19). K20 participates in a covalent cross-link: Glycyl lysine isopeptide (Lys-Gly) (interchain with G-Cter in SUMO2). Residue K33 participates in ATP binding. At S39 the chain carries Phosphoserine. At Y77 the chain carries Phosphotyrosine. Residue D128 is the Proton acceptor of the active site. K139 is covalently cross-linked (Glycyl lysine isopeptide (Lys-Gly) (interchain with G-Cter in SUMO2)). The residue at position 141 (T141) is a Phosphothreonine. At T161 the chain carries Phosphothreonine; by CAK. Residue S178 is modified to Phosphoserine. T222 is subject to Phosphothreonine. N6-succinyllysine is present on K245. The residue at position 248 (S248) is a Phosphoserine.

Belongs to the protein kinase superfamily. CMGC Ser/Thr protein kinase family. CDC2/CDKX subfamily. In terms of assembly, forms a stable but non-covalent complex with a regulatory subunit and with a cyclin. Interacts with cyclins-B (CCNB1, CCNB2 and CCNB3) to form a serine/threonine kinase holoenzyme complex also known as maturation promoting factor (MPF). The cyclin subunit imparts substrate specificity to the complex. Can also form CDK1-cylin-D and CDK1-cyclin-E complexes that phosphorylate RB1 in vitro. Binds to RB1 and other transcription factors such as FOXO1 and RUNX2. Promotes G2-M transition when in complex with a cyclin-B. Interacts with DLGAP5. Binds to the CDK inhibitors CDKN1A/p21 and CDKN1B/p27. Isoform 2 is unable to complex with cyclin-B1 and also fails to bind to CDKN1A/p21. Interacts with catalytically active CCNB1 and RALBP1 during mitosis to form an endocytotic complex during interphase. Associates with cyclins-A and B1 during S-phase in regenerating hepatocytes. Interacts with FANCC. Interacts with CEP63; this interaction recruits CDK1 to centrosomes. Interacts with CENPA. Interacts with NR1D1. Interacts with proteasome subunit PSMA8; to participate in meiosis progression during spermatogenesis. Phosphorylation at Thr-161 by CAK/CDK7 activates kinase activity. Phosphorylation at Thr-14 and Tyr-15 by PKMYT1 prevents nuclear translocation. Phosphorylation at Tyr-15 by WEE1 and WEE2 inhibits the protein kinase activity and acts as a negative regulator of entry into mitosis (G2 to M transition). Phosphorylation by PKMYT1 and WEE1 takes place during mitosis to keep CDK1-cyclin-B complexes inactive until the end of G2. By the end of G2, PKMYT1 and WEE1 are inactivated, but CDC25A and CDC25B are activated. Dephosphorylation by active CDC25A and CDC25B at Thr-14 and Tyr-15, leads to CDK1 activation at the G2-M transition. Phosphorylation at Tyr-15 by WEE2 during oogenesis is required to maintain meiotic arrest in oocytes during the germinal vesicle (GV) stage, a long period of quiescence at dictyate prophase I, leading to prevent meiotic reentry. Phosphorylation by WEE2 is also required for metaphase II exit during egg activation to ensure exit from meiosis in oocytes and promote pronuclear formation. Phosphorylated at Tyr-4 by PKR/EIF2AK2 upon genotoxic stress. This phosphorylation triggers CDK1 polyubiquitination and subsequent proteolysis, thus leading to G2 arrest. In response to UV irradiation, phosphorylation at Tyr-15 by PRKCD activates the G2/M DNA damage checkpoint. Post-translationally, polyubiquitinated upon genotoxic stress.

It is found in the nucleus. The protein resides in the cytoplasm. The protein localises to the mitochondrion. Its subcellular location is the cytoskeleton. It localises to the microtubule organizing center. It is found in the centrosome. The protein resides in the spindle. It catalyses the reaction L-seryl-[protein] + ATP = O-phospho-L-seryl-[protein] + ADP + H(+). The enzyme catalyses L-threonyl-[protein] + ATP = O-phospho-L-threonyl-[protein] + ADP + H(+). It carries out the reaction [DNA-directed RNA polymerase] + ATP = phospho-[DNA-directed RNA polymerase] + ADP + H(+). Phosphorylation at Thr-14 or Tyr-15 inactivates the enzyme, while phosphorylation at Thr-161 activates it. Activated through a multistep process; binding to cyclin-B is required for relocation of cyclin-kinase complexes to the nucleus, activated by CAK/CDK7-mediated phosphorylation on Thr-161, and CDC25-mediated dephosphorylation of inhibitory phosphorylation on Thr-14 and Tyr-15. Activity is restricted during S-phase in an ATR-dependent manner to prevent premature entry into G2. Repressed by the CDK inhibitors CDKN1A/p21 and CDKN1B/p27 during the G1 phase and by CDKN1A/p21 at the G1-S checkpoint upon DNA damage. Transient activation by rapid and transient dephosphorylation at Tyr-15 triggered by TGFB1. Its function is as follows. Plays a key role in the control of the eukaryotic cell cycle by modulating the centrosome cycle as well as mitotic onset; promotes G2-M transition via association with multiple interphase cyclins. Phosphorylates PARVA/actopaxin, APC, AMPH, APC, BARD1, Bcl-xL/BCL2L1, BRCA2, CALD1, CASP8, CDC7, CDC20, CDC25A, CDC25C, CC2D1A, CENPA, CSNK2 proteins/CKII, FZR1/CDH1, CDK7, CEBPB, CHAMP1, DMD/dystrophin, EEF1 proteins/EF-1, EZH2, KIF11/EG5, EGFR, FANCG, FOS, GFAP, GOLGA2/GM130, GRASP1, UBE2A/hHR6A, HIST1H1 proteins/histone H1, HMGA1, HIVEP3/KRC, KAT5, LMNA, LMNB, LBR, MKI67, LATS1, MAP1B, MAP4, MARCKS, MCM2, MCM4, MKLP1, MLST8, MYB, NEFH, NFIC, NPC/nuclear pore complex, PITPNM1/NIR2, NPM1, NCL, NUCKS1, NPM1/numatrin, ORC1, PRKAR2A, EEF1E1/p18, EIF3F/p47, p53/TP53, NONO/p54NRB, PAPOLA, PLEC/plectin, RB1, TPPP, UL40/R2, RAB4A, RAP1GAP, RBBP8/CtIP, RCC1, RPS6KB1/S6K1, KHDRBS1/SAM68, ESPL1, SKI, BIRC5/survivin, STIP1, TEX14, beta-tubulins, MAPT/TAU, NEDD1, VIM/vimentin, TK1, FOXO1, RUNX1/AML1, SAMHD1, SIRT2, CGAS, ZAR1 and RUNX2. CDK1/CDC2-cyclin-B controls pronuclear union in interphase fertilized eggs. Essential for early stages of embryonic development. During G2 and early mitosis, CDC25A/B/C-mediated dephosphorylation activates CDK1/cyclin complexes which phosphorylate several substrates that trigger at least centrosome separation, Golgi dynamics, nuclear envelope breakdown and chromosome condensation. Once chromosomes are condensed and aligned at the metaphase plate, CDK1 activity is switched off by WEE1- and PKMYT1-mediated phosphorylation to allow sister chromatid separation, chromosome decondensation, reformation of the nuclear envelope and cytokinesis. Phosphorylates KRT5 during prometaphase and metaphase. Inactivated by PKR/EIF2AK2- and WEE1-mediated phosphorylation upon DNA damage to stop cell cycle and genome replication at the G2 checkpoint thus facilitating DNA repair. Reactivated after successful DNA repair through WIP1-dependent signaling leading to CDC25A/B/C-mediated dephosphorylation and restoring cell cycle progression. Catalyzes lamin (LMNA, LMNB1 and LMNB2) phosphorylation at the onset of mitosis, promoting nuclear envelope breakdown. In proliferating cells, CDK1-mediated FOXO1 phosphorylation at the G2-M phase represses FOXO1 interaction with 14-3-3 proteins and thereby promotes FOXO1 nuclear accumulation and transcription factor activity, leading to cell death of postmitotic neurons. The phosphorylation of beta-tubulins regulates microtubule dynamics during mitosis. NEDD1 phosphorylation promotes PLK1-mediated NEDD1 phosphorylation and subsequent targeting of the gamma-tubulin ring complex (gTuRC) to the centrosome, an important step for spindle formation. In addition, CC2D1A phosphorylation regulates CC2D1A spindle pole localization and association with SCC1/RAD21 and centriole cohesion during mitosis. The phosphorylation of Bcl-xL/BCL2L1 after prolongated G2 arrest upon DNA damage triggers apoptosis. In contrast, CASP8 phosphorylation during mitosis prevents its activation by proteolysis and subsequent apoptosis. This phosphorylation occurs in cancer cell lines, as well as in primary breast tissues and lymphocytes. EZH2 phosphorylation promotes H3K27me3 maintenance and epigenetic gene silencing. CALD1 phosphorylation promotes Schwann cell migration during peripheral nerve regeneration. CDK1-cyclin-B complex phosphorylates NCKAP5L and mediates its dissociation from centrosomes during mitosis. Regulates the amplitude of the cyclic expression of the core clock gene BMAL1 by phosphorylating its transcriptional repressor NR1D1, and this phosphorylation is necessary for SCF(FBXW7)-mediated ubiquitination and proteasomal degradation of NR1D1. Phosphorylates EML3 at 'Thr-881' which is essential for its interaction with HAUS augmin-like complex and TUBG1. Phosphorylates CGAS during mitosis, leading to its inhibition, thereby preventing CGAS activation by self DNA during mitosis. Phosphorylates SKA3 during mitosis which promotes SKA3 binding to the NDC80 complex and anchoring of the SKA complex to kinetochores, to enable stable attachment of mitotic spindle microtubules to kinetochores. The protein is Cyclin-dependent kinase 1 (Cdk1) of Mus musculus (Mouse).